The primary structure comprises 226 residues: Leucyl/phenylalanyl-tRNA--protein transferase (226 aa).

The protein belongs to the L/F-transferase family.

Its subcellular location is the cytoplasm. It carries out the reaction N-terminal L-lysyl-[protein] + L-leucyl-tRNA(Leu) = N-terminal L-leucyl-L-lysyl-[protein] + tRNA(Leu) + H(+). It catalyses the reaction N-terminal L-arginyl-[protein] + L-leucyl-tRNA(Leu) = N-terminal L-leucyl-L-arginyl-[protein] + tRNA(Leu) + H(+). The enzyme catalyses L-phenylalanyl-tRNA(Phe) + an N-terminal L-alpha-aminoacyl-[protein] = an N-terminal L-phenylalanyl-L-alpha-aminoacyl-[protein] + tRNA(Phe). Its function is as follows. Functions in the N-end rule pathway of protein degradation where it conjugates Leu, Phe and, less efficiently, Met from aminoacyl-tRNAs to the N-termini of proteins containing an N-terminal arginine or lysine. The sequence is that of Leucyl/phenylalanyl-tRNA--protein transferase from Pseudomonas paraeruginosa (strain DSM 24068 / PA7) (Pseudomonas aeruginosa (strain PA7)).